A 233-amino-acid chain; its full sequence is MAKLTKRMRVIREKVDVTKEYEINEAVALLQELATAKFVESVDVAVNLGIDARKSDQNVRGATVLPHGTGRDIRVAVFTQGANAEAAKEAGADIVGMEDLAEQVKKGEMNFDVVVASPDAMRVVGQLGTILGPRGLMPNPKVGTVTPNVAEAVKNAKAGQVRYRNDKNGIIHTTIGKANFSAEQIKENLEALLVALKKAKPSSAKGTFLKKVSISTTMGAGVAVDQASLNTQA.

This sequence belongs to the universal ribosomal protein uL1 family. In terms of assembly, part of the 50S ribosomal subunit.

Binds directly to 23S rRNA. The L1 stalk is quite mobile in the ribosome, and is involved in E site tRNA release. In terms of biological role, protein L1 is also a translational repressor protein, it controls the translation of the L11 operon by binding to its mRNA. The chain is Large ribosomal subunit protein uL1 from Vibrio parahaemolyticus serotype O3:K6 (strain RIMD 2210633).